We begin with the raw amino-acid sequence, 170 residues long: Photosystem I assembly protein Ycf3 (170 aa).

TPR repeat units lie at residues Ala-35–Pro-68, Ser-72–Leu-105, and Gly-120–Asn-153.

Belongs to the Ycf3 family.

The protein resides in the plastid. It localises to the chloroplast thylakoid membrane. Functionally, essential for the assembly of the photosystem I (PSI) complex. May act as a chaperone-like factor to guide the assembly of the PSI subunits. The protein is Photosystem I assembly protein Ycf3 of Zea mays (Maize).